A 1488-amino-acid polypeptide reads, in one-letter code: Phenolphthiocerol/phthiocerol polyketide synthase subunit E (1488 aa).

The region spanning 5 to 438 is the Ketosynthase family 3 (KS3) domain; the sequence is ENAIAVVGMA…GTNAHVVLEE (434 aa). Catalysis depends on for beta-ketoacyl synthase activity residues cysteine 184, histidine 320, and histidine 361. An acyltransferase region spans residues 551–868; that stretch reads VFLFPGQGAQ…GELWSAGVEV (318 aa). The For malonyltransferase activity role is filled by serine 641. The Carrier domain occupies 930–1004; sequence NGESQTEVTL…SLTAAVDASF (75 aa). The residue at position 965 (serine 965) is an O-(pantetheine 4'-phosphoryl)serine. 1286–1331 contacts NADP(+); sequence EGVVAVELEGEGRSVLRPDVDLRRTVGWFTTYYPVPLACATGLGAL.

Requires NADP(+) as cofactor. It depends on pantetheine 4'-phosphate as a cofactor.

The catalysed reaction is icosanoyl-[(phenol)carboxyphthiodiolenone synthase] + 2 (S)-methylmalonyl-CoA + 3 malonyl-CoA + 5 NADPH + 10 H(+) = C32-carboxyphthiodiolenone-[(phenol)carboxyphthiodiolenone synthase] + 5 CO2 + 5 NADP(+) + 5 CoA + 2 H2O. The enzyme catalyses docosanoyl-[(phenol)carboxyphthiodiolenone synthase] + 2 (S)-methylmalonyl-CoA + 3 malonyl-CoA + 5 NADPH + 10 H(+) = C34-carboxyphthiodiolenone-[(phenol)carboxyphthiodiolenone synthase] + 5 CO2 + 5 NADP(+) + 5 CoA + 2 H2O. It carries out the reaction 17-(4-hydroxyphenyl)heptadecanoyl-[(phenol)carboxyphthiodiolenone synthase] + 2 (S)-methylmalonyl-CoA + 3 malonyl-CoA + 5 NADPH + 10 H(+) = C35-(phenol)carboxyphthiodiolenone-[(phenol)carboxyphthiodiolenone synthase] + 5 CO2 + 5 NADP(+) + 5 CoA + 2 H2O. It catalyses the reaction 19-(4-hydroxyphenyl)nonadecanoyl-[(phenol)carboxyphthiodiolenone synthase] + 2 (S)-methylmalonyl-CoA + 3 malonyl-CoA + 5 NADPH + 10 H(+) = C37-(phenol)carboxyphthiodiolenone-[(phenol)carboxyphthiodiolenone synthase] + 5 CO2 + 5 NADP(+) + 5 CoA + 2 H2O. It functions in the pathway lipid metabolism; fatty acid biosynthesis. Part of the PpsABCDE complex involved in the biosynthesis of the lipid core common to phthiocerols and phenolphthiocerols by successive additions of malonyl-CoA or methylmalonyl-CoA extender units. PpsA can accept as substrate the activated forms of either icosanoyl (C20), docosanoyl (C22) or lignoceroyl (C24) groups from FadD26, or a (4-hydroxyphenyl)-C17 or (4-hydroxyphenyl)-C19 fatty acyl from FadD29. PpsA initiates the biosynthesis and extends its substrate using a malonyl-CoA extender unit. The PpsB and PpsC proteins add the second and third malonyl-CoA extender units. PpsD adds an (R)-methylmalonyl unit and PpsE adds a second (R)-methylmalonyl unit. The incorporation of the methylmalonyl units results in formation of two branched methyl groups in the elongated product. The sequence is that of Phenolphthiocerol/phthiocerol polyketide synthase subunit E (ppsE) from Mycobacterium tuberculosis (strain CDC 1551 / Oshkosh).